A 198-amino-acid chain; its full sequence is Na(+)-translocating NADH-quinone reductase subunit E (198 aa).

The next 6 membrane-spanning stretches (helical) occupy residues Ser-11–Val-31, Phe-39–Val-59, Phe-77–Ile-97, Gly-110–Val-130, Val-140–Ile-160, and Leu-176–Val-196.

This sequence belongs to the NqrDE/RnfAE family. In terms of assembly, composed of six subunits; NqrA, NqrB, NqrC, NqrD, NqrE and NqrF.

It is found in the cell inner membrane. The enzyme catalyses a ubiquinone + n Na(+)(in) + NADH + H(+) = a ubiquinol + n Na(+)(out) + NAD(+). Its function is as follows. NQR complex catalyzes the reduction of ubiquinone-1 to ubiquinol by two successive reactions, coupled with the transport of Na(+) ions from the cytoplasm to the periplasm. NqrA to NqrE are probably involved in the second step, the conversion of ubisemiquinone to ubiquinol. The protein is Na(+)-translocating NADH-quinone reductase subunit E of Vibrio anguillarum (Listonella anguillarum).